The sequence spans 421 residues: Gamma-glutamyl phosphate reductase (421 aa).

This sequence belongs to the gamma-glutamyl phosphate reductase family.

The protein localises to the cytoplasm. It carries out the reaction L-glutamate 5-semialdehyde + phosphate + NADP(+) = L-glutamyl 5-phosphate + NADPH + H(+). It functions in the pathway amino-acid biosynthesis; L-proline biosynthesis; L-glutamate 5-semialdehyde from L-glutamate: step 2/2. Catalyzes the NADPH-dependent reduction of L-glutamate 5-phosphate into L-glutamate 5-semialdehyde and phosphate. The product spontaneously undergoes cyclization to form 1-pyrroline-5-carboxylate. The sequence is that of Gamma-glutamyl phosphate reductase from Pseudomonas aeruginosa (strain ATCC 15692 / DSM 22644 / CIP 104116 / JCM 14847 / LMG 12228 / 1C / PRS 101 / PAO1).